The sequence spans 830 residues: Probable glucan 1,3-beta-glucosidase D (830 aa).

2 stretches are compositionally biased toward basic and acidic residues: residues 1-11 and 74-84; these read MPGHSRSRDRL and VHEHDHDHEYD. Disordered regions lie at residues 1 to 91, 127 to 163, and 260 to 297; these read MPGH…EEPW, MSGA…QRRK, and GGPG…STSA. Topologically, residues 1–307 are cytoplasmic; sequence MPGHSRSRDR…RPSFWKRYHK (307 aa). Over residues 147-163 the composition is skewed to basic residues; sequence GKGKKRLDRETRRQRRK. The chain crosses the membrane as a helical; Signal-anchor for type II membrane protein span at residues 308–328; the sequence is TFIFFAILIVLAAIAIPVGII. The Extracellular segment spans residues 329 to 830; it reads EARRLHGTSG…PSFGNLPEYY (502 aa). Asn-341, Asn-376, Asn-381, Asn-393, Asn-397, Asn-546, and Asn-558 each carry an N-linked (GlcNAc...) asparagine glycan. The Proton donor role is filled by Glu-597. N-linked (GlcNAc...) asparagine glycans are attached at residues Asn-610, Asn-669, and Asn-689. The Nucleophile role is filled by Glu-702.

Belongs to the glycosyl hydrolase 5 (cellulase A) family.

It localises to the cell membrane. It catalyses the reaction Successive hydrolysis of beta-D-glucose units from the non-reducing ends of (1-&gt;3)-beta-D-glucans, releasing alpha-glucose.. Glucosidase involved in the degradation of cellulosic biomass. Active on lichenan. In Aspergillus niger (strain ATCC MYA-4892 / CBS 513.88 / FGSC A1513), this protein is Probable glucan 1,3-beta-glucosidase D (exgD).